We begin with the raw amino-acid sequence, 682 residues long: Acyl-CoA synthetase short-chain family member 3, mitochondrial (682 aa).

Residues Met-1–Gly-29 constitute a mitochondrion transit peptide. Glu-222–Arg-225 is a binding site for CoA. ATP is bound by residues Gly-420–Arg-422 and Asp-441–Thr-446. N6-succinyllysine is present on Lys-513. Position 519 is an N6-acetyllysine (Lys-519). Residues Asp-534, Arg-549, and Arg-560 each coordinate ATP. Arg-619 contributes to the CoA binding site.

The protein belongs to the ATP-dependent AMP-binding enzyme family.

It localises to the mitochondrion matrix. It carries out the reaction acetate + ATP + CoA = acetyl-CoA + AMP + diphosphate. The enzyme catalyses propanoate + ATP + CoA = propanoyl-CoA + AMP + diphosphate. The catalysed reaction is butanoate + ATP + CoA = butanoyl-CoA + AMP + diphosphate. In terms of biological role, catalyzes the synthesis of acetyl-CoA from short-chain fatty acids. Propionate is the preferred substrate but can also utilize acetate and butyrate with a much lower affinity. The protein is Acyl-CoA synthetase short-chain family member 3, mitochondrial (Acss3) of Mus musculus (Mouse).